Reading from the N-terminus, the 697-residue chain is uncharacterized protein (697 aa).

Positions 24 to 51 (CIRCRQKKIKCSGEKPSCQACSNNKVEC) form a DNA-binding region, zn(2)-C6 fungal-type. Residues 500 to 520 (YIMSPFVGFSILTAATIHMLL) traverse the membrane as a helical segment.

The protein localises to the nucleus membrane. This is an uncharacterized protein from Schizosaccharomyces pombe (strain 972 / ATCC 24843) (Fission yeast).